The chain runs to 571 residues: Proline--tRNA ligase (571 aa).

This sequence belongs to the class-II aminoacyl-tRNA synthetase family. ProS type 1 subfamily. Homodimer.

It localises to the cytoplasm. The catalysed reaction is tRNA(Pro) + L-proline + ATP = L-prolyl-tRNA(Pro) + AMP + diphosphate. Catalyzes the attachment of proline to tRNA(Pro) in a two-step reaction: proline is first activated by ATP to form Pro-AMP and then transferred to the acceptor end of tRNA(Pro). As ProRS can inadvertently accommodate and process non-cognate amino acids such as alanine and cysteine, to avoid such errors it has two additional distinct editing activities against alanine. One activity is designated as 'pretransfer' editing and involves the tRNA(Pro)-independent hydrolysis of activated Ala-AMP. The other activity is designated 'posttransfer' editing and involves deacylation of mischarged Ala-tRNA(Pro). The misacylated Cys-tRNA(Pro) is not edited by ProRS. The chain is Proline--tRNA ligase from Haemophilus ducreyi (strain 35000HP / ATCC 700724).